Here is a 273-residue protein sequence, read N- to C-terminus: MERTIGIDAGGTLTKIAYFNKKKLLTFEKFYSHEQHKIIDWIKNNNGIKQICITGGKSKLLQQLLTGSYKIIELSEFEATLAGVQFILKEEQHTINNFILTNIGTGTSIHYVYNEQYIRAGGTGVGGGTIMGLSKLLTNIDHFEDVIPLTKVGSRKELDITVGDIYGGILSPIDNNLTASNFGKAAITESNNSSSDILATVQGLVGEVVTALSLQFAETKNIEHIIYIGSTLCNNVQLQHIISSYTEYQNKTPIFLQDGGNSGAIGALLHATK.

8–15 (DAGGTLTK) is a binding site for ATP. The active-site Proton acceptor is glutamate 76. Residues threonine 105, 127–131 (GGTIM), phenylalanine 143, and serine 230 each bind ATP.

It belongs to the type II pantothenate kinase family. In terms of assembly, homodimer.

It is found in the cytoplasm. It carries out the reaction (R)-pantothenate + ATP = (R)-4'-phosphopantothenate + ADP + H(+). Its pathway is cofactor biosynthesis; coenzyme A biosynthesis; CoA from (R)-pantothenate: step 1/5. Catalyzes the phosphorylation of pantothenate (Pan), the first step in CoA biosynthesis. This Bacillus cereus (strain ATCC 14579 / DSM 31 / CCUG 7414 / JCM 2152 / NBRC 15305 / NCIMB 9373 / NCTC 2599 / NRRL B-3711) protein is Type II pantothenate kinase.